The sequence spans 417 residues: Phosphoglycerate kinase (417 aa).

(2R)-3-phosphoglycerate is bound by residues Val-23, Asp-24, Phe-25, Asn-26, Gln-39, Arg-40, Ser-63, His-64, Gly-66, Arg-67, Leu-122, Arg-123, His-170, and Arg-171. Gly-214 is a binding site for ADP. Gly-214 provides a ligand contact to CDP. AMP-binding residues include Ala-215 and Lys-216. Ala-215 contacts ATP. Position 215 (Ala-215) interacts with Mg(2+). Asp-219 contacts CDP. Asp-219 is a binding site for Mg(2+). Lys-220 serves as a coordination point for AMP. Residue Lys-220 participates in ATP binding. Gly-238 is an ADP binding site. Gly-238 contacts CDP. The AMP site is built by Gly-239 and Gly-313. Residues Gly-239 and Gly-313 each contribute to the ATP site. CDP contacts are provided by Gly-338, Ala-340, and Phe-343. Residue Phe-343 coordinates ADP. Glu-344 is a binding site for AMP. ATP contacts are provided by Glu-344, Asp-375, and Thr-376. Asp-375 provides a ligand contact to Mg(2+).

Belongs to the phosphoglycerate kinase family. In terms of assembly, monomer. Mg(2+) is required as a cofactor.

Its subcellular location is the cytoplasm. It localises to the mitochondrion. It carries out the reaction (2R)-3-phosphoglycerate + ATP = (2R)-3-phospho-glyceroyl phosphate + ADP. The protein operates within carbohydrate degradation; glycolysis; pyruvate from D-glyceraldehyde 3-phosphate: step 2/5. Its function is as follows. Catalyzes one of the two ATP producing reactions in the glycolytic pathway via the reversible conversion of 1,3-diphosphoglycerate to 3-phosphoglycerate. Both L- and D- forms of purine and pyrimidine nucleotides can be used as substrates, but the activity is much lower on pyrimidines. Negatively regulates the biosynthesis of acetyl-CoA from pyruvate in the mitochondrion. This is Phosphoglycerate kinase (pgk1) from Hypocrea rufa (Trichoderma viride).